Reading from the N-terminus, the 262-residue chain is uncharacterized protein (262 aa).

Positions 41–118 (ELQKNEKIDK…EEKAEDFINK (78 aa)) form a coiled coil.

This is an uncharacterized protein from Plasmodium falciparum (isolate 3D7).